A 411-amino-acid chain; its full sequence is Indian hedgehog protein (411 aa).

The signal sequence occupies residues 1-27 (MSPARLRPRLHFCLVLLLLLVVPAAWG). The N-palmitoyl cysteine moiety is linked to residue C28. Ca(2+)-binding residues include E94, E95, D100, T130, E131, D134, and D136. Residues H145, D152, and H187 each coordinate Zn(2+). Residue G202 is the site of Cholesterol glycine ester attachment. A glycan (N-linked (GlcNAc...) asparagine) is linked at N282.

Belongs to the hedgehog family. Multimer. As to quaternary structure, interacts with BOC and CDON. Interacts with PTCH1. Interacts with glypican GPC3. Cholesterylation is required for N-product targeting to lipid rafts and multimerization. Post-translationally, the C-terminal domain displays an autoproteolysis activity and a cholesterol transferase activity. Both activities result in the cleavage of the full-length protein and covalent attachment of a cholesterol moiety to the C-terminal of the newly generated N-product. The N-product is the active species in both local and long-range signaling, whereas the C-product is degraded in the endoplasmic reticulum. In terms of processing, N-palmitoylation by HHAT of N-product is required for indian hedgehog protein N-product multimerization and full activity. Expressed in embryonic lung, and in adult kidney and liver.

The protein resides in the cell membrane. The protein localises to the endoplasmic reticulum membrane. Its subcellular location is the golgi apparatus membrane. It localises to the secreted. The catalysed reaction is glycyl-L-cysteinyl-[protein] + cholesterol + H(+) = [protein]-C-terminal glycyl cholesterol ester + N-terminal L-cysteinyl-[protein]. In terms of biological role, plays a role in embryonic morphogenesis; it is involved in the regulation of endochondral skeleton formation, and the development of retinal pigment epithelium (RPE), photoreceptors and periocular tissues. The C-terminal part of the indian hedgehog protein precursor displays an autoproteolysis and a cholesterol transferase activity. Both activities result in the cleavage of the full-length protein into two parts followed by the covalent attachment of a cholesterol moiety to the C-terminal of the newly generated N-product. Both activities occur in the endoplasmic reticulum. Plays a role in hedgehog paracrine signaling. Associated with the very-low-density lipoprotein (VLDL) particles to function as a circulating morphogen for endothelial cell integrity maintenance. Functionally, the dually lipidated indian hedgehog protein N-product is a morphogen which is essential for a variety of patterning events during development. Binds to the patched (PTCH1) receptor, which functions in association with smoothened (SMO), to activate the transcription of target genes. Plays a role in morphogenesis of the skeleton by coordinating growth and differentiation of the endochondral skeleton. Positively regulates PTHLH expression during endochondral bone formation preventing chondrocyte hypertrophy. In contrast, participates in normal chondrocyte proliferation in a PTHLH-independent pathway. In Homo sapiens (Human), this protein is Indian hedgehog protein.